The chain runs to 435 residues: Putative dimethyl sulfoxide reductase membrane subunit C (435 aa).

The next 11 helical transmembrane spans lie at 22-42, 57-77, 95-115, 135-155, 186-206, 220-240, 257-277, 281-301, 304-324, 333-353, and 392-412; these read GWLG…AYQL, WGLY…GLIL, LGVL…LPDI, VWDF…LWLL, FWTA…TGWI, LVAP…LLVV, LTSL…YLLA, LPHA…FLIG, VYFW…LATP, IFTA…RLVF, and VEIA…MAGL.

The protein belongs to the NrfD family. As to quaternary structure, probable multiprotein complex that likely consists of DmsA, DmsB and DmsC.

Its subcellular location is the cell membrane. Its function is as follows. Dimethyl sulfoxide (DMSO) reductase catalyzes the reduction of dimethyl sulfoxide (DMSO) to dimethyl sulfide (DMS) during anaerobic respiration; it can also use trimethylamine N-oxide (TMAO) as terminal electron acceptor. Subunit C is proposed to be a membrane anchoring subunit. In Halobacterium salinarum (strain ATCC 700922 / JCM 11081 / NRC-1) (Halobacterium halobium), this protein is Putative dimethyl sulfoxide reductase membrane subunit C (dmsC).